Reading from the N-terminus, the 306-residue chain is Recombination-associated protein RdgC (306 aa).

The protein belongs to the RdgC family.

It is found in the cytoplasm. It localises to the nucleoid. Its function is as follows. May be involved in recombination. In Pseudomonas entomophila (strain L48), this protein is Recombination-associated protein RdgC.